We begin with the raw amino-acid sequence, 91 residues long: Large ribosomal subunit protein uL23c (91 aa).

Belongs to the universal ribosomal protein uL23 family. In terms of assembly, part of the 50S ribosomal subunit.

It is found in the plastid. It localises to the chloroplast. In terms of biological role, binds to 23S rRNA. This Anthoceros angustus (Hornwort) protein is Large ribosomal subunit protein uL23c (rpl23).